Here is a 392-residue protein sequence, read N- to C-terminus: Probable tRNA sulfurtransferase (392 aa).

The THUMP domain occupies 59–167 (ADITDRVKKV…DQAFVFSNKI (109 aa)). ATP contacts are provided by residues 184 to 185 (LL), 209 to 210 (HF), Arg-266, Gly-288, and Gln-297.

The protein belongs to the ThiI family.

It is found in the cytoplasm. The catalysed reaction is [ThiI sulfur-carrier protein]-S-sulfanyl-L-cysteine + a uridine in tRNA + 2 reduced [2Fe-2S]-[ferredoxin] + ATP + H(+) = [ThiI sulfur-carrier protein]-L-cysteine + a 4-thiouridine in tRNA + 2 oxidized [2Fe-2S]-[ferredoxin] + AMP + diphosphate. It catalyses the reaction [ThiS sulfur-carrier protein]-C-terminal Gly-Gly-AMP + S-sulfanyl-L-cysteinyl-[cysteine desulfurase] + AH2 = [ThiS sulfur-carrier protein]-C-terminal-Gly-aminoethanethioate + L-cysteinyl-[cysteine desulfurase] + A + AMP + 2 H(+). Its pathway is cofactor biosynthesis; thiamine diphosphate biosynthesis. In terms of biological role, catalyzes the ATP-dependent transfer of a sulfur to tRNA to produce 4-thiouridine in position 8 of tRNAs, which functions as a near-UV photosensor. Also catalyzes the transfer of sulfur to the sulfur carrier protein ThiS, forming ThiS-thiocarboxylate. This is a step in the synthesis of thiazole, in the thiamine biosynthesis pathway. The sulfur is donated as persulfide by IscS. The chain is Probable tRNA sulfurtransferase from Alkaliphilus oremlandii (strain OhILAs) (Clostridium oremlandii (strain OhILAs)).